The sequence spans 350 residues: 2,5-dihydroxypyridine 5,6-dioxygenase (350 aa).

The Fe cation site is built by His-265, His-318, and Asp-320.

Requires Fe(2+) as cofactor.

The enzyme catalyses 2,5-dihydroxypyridine + O2 = N-formylmaleamate + H(+). The protein operates within cofactor degradation; nicotinate degradation. Catalyzes the dioxygenolytic ring cleavage of 2,5-dihydroxypyridine between carbons 5 and 6 generating N-formylmaleamate in the aerobic nicotinate degradation pathway. This Pseudomonas putida (strain ATCC 47054 / DSM 6125 / CFBP 8728 / NCIMB 11950 / KT2440) protein is 2,5-dihydroxypyridine 5,6-dioxygenase (nicX).